Reading from the N-terminus, the 89-residue chain is Small ribosomal subunit protein uS19 (89 aa).

The protein belongs to the universal ribosomal protein uS19 family.

Functionally, protein S19 forms a complex with S13 that binds strongly to the 16S ribosomal RNA. In Ruthia magnifica subsp. Calyptogena magnifica, this protein is Small ribosomal subunit protein uS19.